Consider the following 219-residue polypeptide: Adenylate kinase (219 aa).

10 to 15 lines the ATP pocket; the sequence is GAGKGT. An NMP region spans residues 30 to 59; that stretch reads STGDMLRAAVKAGTPLGQQAKKIMDEGGLV. AMP-binding positions include Thr-31, Arg-36, 57–59, 85–88, and Gln-92; these read GLV and GFPR. The LID stretch occupies residues 122–159; that stretch reads GRRVHPGSGRVYHVTHNPPRQEGKDDVTGEDLVQREDD. ATP contacts are provided by residues Arg-123 and 132 to 133; that span reads VY. Positions 128 to 150 are disordered; that stretch reads GSGRVYHVTHNPPRQEGKDDVTG. The span at 140–150 shows a compositional bias: basic and acidic residues; the sequence is PRQEGKDDVTG. AMP-binding residues include Arg-156 and Arg-167. ATP is bound at residue Arg-203.

Belongs to the adenylate kinase family. As to quaternary structure, monomer.

The protein localises to the cytoplasm. It carries out the reaction AMP + ATP = 2 ADP. It participates in purine metabolism; AMP biosynthesis via salvage pathway; AMP from ADP: step 1/1. Its function is as follows. Catalyzes the reversible transfer of the terminal phosphate group between ATP and AMP. Plays an important role in cellular energy homeostasis and in adenine nucleotide metabolism. In Halorhodospira halophila (strain DSM 244 / SL1) (Ectothiorhodospira halophila (strain DSM 244 / SL1)), this protein is Adenylate kinase.